We begin with the raw amino-acid sequence, 347 residues long: MDVNLFDFHLPEEQIAQVPLLDRTSSKLMVVNRETGALRHEKFHDIVSYFNAGDTLVINDTKVLPARLFGVKEETGGKIELLLLKQTSDDVWETLAKPAKRVKPGTVLSFGDGLLRAECVEALDDGGRILKFSYTGIFYEVLDQLGTMPLPPYIHEQLEDQDRYQTVYARERGSAAAPTAGLHFTPELLQALTDKGVQLAPLTLHVGLGTFRPVSVDDVDSHKMHSEYYELPESSAKILRETRKNGGRIIAVGTTSTRTLETVIRDHGDFVEASGWTDIFIYPGQEIKGIDGLITNFHLPKSTLIMLVSALSTREHILHAYEEAVAQNYRFFSFGDAMFLTREELNR.

Belongs to the QueA family. Monomer.

Its subcellular location is the cytoplasm. The enzyme catalyses 7-aminomethyl-7-carbaguanosine(34) in tRNA + S-adenosyl-L-methionine = epoxyqueuosine(34) in tRNA + adenine + L-methionine + 2 H(+). It participates in tRNA modification; tRNA-queuosine biosynthesis. Functionally, transfers and isomerizes the ribose moiety from AdoMet to the 7-aminomethyl group of 7-deazaguanine (preQ1-tRNA) to give epoxyqueuosine (oQ-tRNA). The polypeptide is S-adenosylmethionine:tRNA ribosyltransferase-isomerase (Exiguobacterium sibiricum (strain DSM 17290 / CCUG 55495 / CIP 109462 / JCM 13490 / 255-15)).